The sequence spans 152 residues: MSEKYIVTWDRLQIHARKLASRLMPSEQWKGIIAVSRGGLVPGALLARELGIRHVDTVCISSYDHDNQRELKVLKRAEGDGEGFIVIDDLVDTGGTAVAIREMYPKAHFVTIFAKPAGRPLVDDYVVDIPQDTWIEQPWDMGVVFVPPISGR.

5-phospho-alpha-D-ribose 1-diphosphate-binding positions include 37-38 (RG), arginine 69, and 88-96 (DDLVDTGGT). Arginine 69 is a GMP binding site. Aspartate 89 contributes to the Mg(2+) binding site. Guanine-binding residues include aspartate 92 and isoleucine 135. The xanthine site is built by aspartate 92 and isoleucine 135. GMP-binding positions include 92-96 (DTGGT) and 134-135 (WI).

This sequence belongs to the purine/pyrimidine phosphoribosyltransferase family. XGPT subfamily. As to quaternary structure, homotetramer. Mg(2+) serves as cofactor.

The protein resides in the cell inner membrane. The catalysed reaction is GMP + diphosphate = guanine + 5-phospho-alpha-D-ribose 1-diphosphate. The enzyme catalyses XMP + diphosphate = xanthine + 5-phospho-alpha-D-ribose 1-diphosphate. It carries out the reaction IMP + diphosphate = hypoxanthine + 5-phospho-alpha-D-ribose 1-diphosphate. It participates in purine metabolism; GMP biosynthesis via salvage pathway; GMP from guanine: step 1/1. Its pathway is purine metabolism; XMP biosynthesis via salvage pathway; XMP from xanthine: step 1/1. Purine salvage pathway enzyme that catalyzes the transfer of the ribosyl-5-phosphate group from 5-phospho-alpha-D-ribose 1-diphosphate (PRPP) to the N9 position of the 6-oxopurines guanine and xanthine to form the corresponding ribonucleotides GMP (guanosine 5'-monophosphate) and XMP (xanthosine 5'-monophosphate), with the release of PPi. To a lesser extent, also acts on hypoxanthine. This is Xanthine-guanine phosphoribosyltransferase from Escherichia coli O7:K1 (strain IAI39 / ExPEC).